A 526-amino-acid chain; its full sequence is Delayed-rectifier potassium channel regulatory subunit KCNS1 (526 aa).

Residues 1-217 lie on the Cytoplasmic side of the membrane; the sequence is MLMLLVRGTH…LTMENPGYSL (217 aa). Residues 218-239 form a helical membrane-spanning segment; it reads PSKLFSCVSISVVLASIAAMCI. The Extracellular portion of the chain corresponds to 240 to 270; that stretch reads HSLPEYQAREAAAAVAAVAAGRSPEGVRDDP. Residues 271–293 traverse the membrane as a helical segment; the sequence is VLRRLEYFCIAWFSFEVSSRLLL. Residues 294-304 lie on the Cytoplasmic side of the membrane; the sequence is APSTRNFFCHP. A helical membrane pass occupies residues 305–322; that stretch reads LNLIDIVSVLPFYLTLLA. Residues 323-337 lie on the Extracellular side of the membrane; it reads GVALGDQGGKEFGHL. Residues 338-358 traverse the membrane as a helical; Voltage-sensor segment; that stretch reads GKVVQVFRLMRIFRVLKLARH. The Cytoplasmic portion of the chain corresponds to 359–373; that stretch reads STGLRSLGATLKHSY. The helical transmembrane segment at 374–395 threads the bilayer; the sequence is REVGILLLYLAVGVSVFSGVAY. Residues 396–408 lie on the Extracellular side of the membrane; that stretch reads TAEKEEDVGFNTI. Positions 409-420 form an intramembrane region, helical; that stretch reads PACWWWGTVSMT. Residues 421-426 carry the Selectivity filter motif; sequence TVGYGD. Residues 421–428 lie within the membrane without spanning it; it reads TVGYGDVV. The Extracellular segment spans residues 429 to 435; the sequence is PVTVAGK. The chain crosses the membrane as a helical span at residues 436–464; sequence LAASGCILGGILVVALPITIIFNKFSHFY. At 465–526 the chain is on the cytoplasmic side; it reads RRQKALEAAV…PSEPPHPQMY (62 aa). Residues 491–526 are disordered; sequence GVSEASLETSRETSQEGRSADLESQAPSEPPHPQMY. The segment covering 499-511 has biased composition (basic and acidic residues); that stretch reads TSRETSQEGRSAD.

This sequence belongs to the potassium channel family. S (TC 1.A.1.2) subfamily. Kv9.1/KCNS1 sub-subfamily. As to quaternary structure, heterotetramer with KCNB1. Heterotetramer with KCNB2. Does not form homomultimers.

Its subcellular location is the cell membrane. Functionally, potassium channel regulatory subunit that modulate the delayed rectifier voltage-gated potassium channel activity of KCNB1 and KCNB2 by altering their kinetics, expression levels, and shifting the half-inactivation potential to more polarized values. While it does not form functional channels on its own, it can form functional heterotetrameric channels with KCNB1 and KCNB2. Each regulatory subunit has unique regulatory properties that can lead to extensive inhibition, significant changes in kinetics, and/or substantial shifts in the voltage dependencies of the inactivation process. This is Delayed-rectifier potassium channel regulatory subunit KCNS1 from Pan troglodytes (Chimpanzee).